Here is a 269-residue protein sequence, read N- to C-terminus: Protein BASIC PENTACYSTEINE3 (269 aa).

It belongs to the BBR/BPC family. As to expression, expressed in seedlings, leaves and pistils. Detected in the base of flowers and tips of carpels, in petal vasculature, in anthers, in young rosette, in the lateral and primary roots, and in the gynobasal portion of the ovule.

The protein localises to the nucleus. Its function is as follows. Transcriptional regulator that specifically binds to GA-rich elements (GAGA-repeats) present in regulatory sequences of genes involved in developmental processes. In Arabidopsis thaliana (Mouse-ear cress), this protein is Protein BASIC PENTACYSTEINE3 (BPC3).